Reading from the N-terminus, the 1554-residue chain is Lysine-specific demethylase 5C (1554 aa).

In terms of domain architecture, JmjN spans 14–55 (CPVFEPSWAEFRDPLGYIAKIRPIAEKSGICKIRPPADWQPP). One can recognise an ARID domain in the interval 79–169 (TRVKLNYLDQ…IVYPYEMYQS (91 aa)). The segment covering 197–207 (LRQSVQPSKFN) has biased composition (polar residues). Positions 197–227 (LRQSVQPSKFNSYGRRAKRLQPDPEPTEEDI) are disordered. Glycyl lysine isopeptide (Lys-Gly) (interchain with G-Cter in SUMO2) cross-links involve residues Lys205, Lys229, Lys244, and Lys274. Residues 284–303 (ESTSPKTFLEGKEELSHSPE) form a disordered region. Ser287 is subject to Phosphoserine. Residue Lys295 forms a Glycyl lysine isopeptide (Lys-Gly) (interchain with G-Cter in SUMO2) linkage. 2 positions are modified to phosphoserine: Ser301 and Ser317. Residues 326 to 372 (VCRMCSRGDEDDKLLLCDGCDDNYHIFCLLPPLPEIPKGVWRCPKCV) form a PHD-type 1 zinc finger. One can recognise a JmjC domain in the interval 468–634 (EYATSGWNLN…AGRQCIEHYR (167 aa)). His514, Asp517, and His602 together coordinate Fe cation. Residues Ser893 and Ser897 each carry the phosphoserine modification. A Glycyl lysine isopeptide (Lys-Gly) (interchain with G-Cter in SUMO2) cross-link involves residue Lys1127. The PHD-type 2 zinc-finger motif lies at 1187–1248 (ICVCGQVPAG…DTKFLCPLCM (62 aa)). Disordered stretches follow at residues 1319-1364 (SKPE…EGSG) and 1437-1535 (AERH…APFS). Residue Ser1353 is modified to Phosphoserine. Residues 1442 to 1457 (SRTRGRALERRRRRKV) are compositionally biased toward basic residues. Basic and acidic residues predominate over residues 1458-1475 (DRGGEPDDPAREELEPKR). Residues 1482 to 1497 (EAEEVQEEEELEEETG) show a composition bias toward acidic residues.

The protein belongs to the JARID1 histone demethylase family. In terms of assembly, part of two distinct complexes, one containing E2F6, and the other containing REST. Interacts with ZMYND8. The cofactor is Fe(2+).

The protein localises to the nucleus. The catalysed reaction is N(6),N(6),N(6)-trimethyl-L-lysyl(4)-[histone H3] + 3 2-oxoglutarate + 3 O2 = L-lysyl(4)-[histone H3] + 3 formaldehyde + 3 succinate + 3 CO2. In terms of biological role, histone demethylase that specifically demethylates 'Lys-4' of histone H3, thereby playing a central role in histone code. Does not demethylate histone H3 'Lys-9', H3 'Lys-27', H3 'Lys-36', H3 'Lys-79' or H4 'Lys-20'. Demethylates trimethylated and dimethylated but not monomethylated H3 'Lys-4'. Participates in transcriptional repression of neuronal genes by recruiting histone deacetylases and REST at neuron-restrictive silencer elements. Represses the CLOCK-BMAL1 heterodimer-mediated transcriptional activation of the core clock component PER2. This is Lysine-specific demethylase 5C (Kdm5c) from Mus musculus (Mouse).